We begin with the raw amino-acid sequence, 396 residues long: Protein-export membrane protein SecD (396 aa).

Helical transmembrane passes span 12–32 (ILIL…KGLD), 243–263 (LKGT…IVSI), 272–292 (IPIL…ASLI), 298–318 (LPSI…QIVI), 338–358 (FFII…LFVL), and 360–380 (VGML…GIFI).

It belongs to the SecD/SecF family. SecD subfamily. As to quaternary structure, part of the protein translocation apparatus. Forms a complex with SecF.

It is found in the cell membrane. Its function is as follows. Involved in protein export. The protein is Protein-export membrane protein SecD of Methanocaldococcus jannaschii (strain ATCC 43067 / DSM 2661 / JAL-1 / JCM 10045 / NBRC 100440) (Methanococcus jannaschii).